The following is a 179-amino-acid chain: ATP synthase subunit delta (179 aa).

The protein belongs to the ATPase delta chain family. In terms of assembly, F-type ATPases have 2 components, F(1) - the catalytic core - and F(0) - the membrane proton channel. F(1) has five subunits: alpha(3), beta(3), gamma(1), delta(1), epsilon(1). F(0) has three main subunits: a(1), b(2) and c(10-14). The alpha and beta chains form an alternating ring which encloses part of the gamma chain. F(1) is attached to F(0) by a central stalk formed by the gamma and epsilon chains, while a peripheral stalk is formed by the delta and b chains.

Its subcellular location is the cell membrane. In terms of biological role, f(1)F(0) ATP synthase produces ATP from ADP in the presence of a proton or sodium gradient. F-type ATPases consist of two structural domains, F(1) containing the extramembraneous catalytic core and F(0) containing the membrane proton channel, linked together by a central stalk and a peripheral stalk. During catalysis, ATP synthesis in the catalytic domain of F(1) is coupled via a rotary mechanism of the central stalk subunits to proton translocation. Functionally, this protein is part of the stalk that links CF(0) to CF(1). It either transmits conformational changes from CF(0) to CF(1) or is implicated in proton conduction. This is ATP synthase subunit delta from Staphylococcus epidermidis (strain ATCC 35984 / DSM 28319 / BCRC 17069 / CCUG 31568 / BM 3577 / RP62A).